The following is a 427-amino-acid chain: Flotillin-1 (427 aa).

Phosphoserine is present on residues Ser-19, Ser-163, and Ser-385. The residue at position 387 (Thr-387) is a Phosphothreonine.

The protein belongs to the band 7/mec-2 family. Flotillin subfamily. As to quaternary structure, heterooligomeric complex of flotillin-1 and flotillin-2 and caveolin-1 and caveolin-2. Interacts with ECPAS.

Its subcellular location is the cell membrane. The protein resides in the endosome. It is found in the membrane. It localises to the caveola. The protein localises to the melanosome. Its subcellular location is the membrane raft. May act as a scaffolding protein within caveolar membranes, functionally participating in formation of caveolae or caveolae-like vesicles. The chain is Flotillin-1 (FLOT1) from Pongo abelii (Sumatran orangutan).